A 103-amino-acid polypeptide reads, in one-letter code: Sec-independent protein translocase protein TatA (103 aa).

The helical transmembrane segment at 1–21 (MGNIFSPTHLIVILLIVLVLF) threads the bilayer. Residues 60 to 103 (YSKTTDVRPQQSQPLSVKRAAERRKGSSSFKEGKASVAKKQRGK) are disordered.

Belongs to the TatA/E family. In terms of assembly, the Tat system comprises two distinct complexes: a TatABC complex, containing multiple copies of TatA, TatB and TatC subunits, and a separate TatA complex, containing only TatA subunits. Substrates initially bind to the TatABC complex, which probably triggers association of the separate TatA complex to form the active translocon.

It localises to the cell inner membrane. Its function is as follows. Part of the twin-arginine translocation (Tat) system that transports large folded proteins containing a characteristic twin-arginine motif in their signal peptide across membranes. TatA could form the protein-conducting channel of the Tat system. The protein is Sec-independent protein translocase protein TatA of Bartonella quintana (strain Toulouse) (Rochalimaea quintana).